A 1033-amino-acid chain; its full sequence is Tyrosine-protein kinase-like otk (1033 aa).

The N-terminal stretch at 1-22 (MTARMISIYGLVLASMMASVWA) is a signal peptide. Residues 23 to 581 (SSSRFQRLPQ…GGDGFLVTRA (559 aa)) are Extracellular-facing. Ig-like C2-type domains follow at residues 25-108 (SRFQ…REAS), 109-199 (PPAK…RVMS), 251-365 (PEDL…LPIS), 368-463 (PGVL…VAIN), and 468-558 (PKFS…VQLV). Residue Asn-39 is glycosylated (N-linked (GlcNAc...) asparagine). 4 disulfide bridges follow: Cys-46-Cys-95, Cys-137-Cys-188, Cys-276-Cys-354, and Cys-399-Cys-447. Residues Asn-336, Asn-417, Asn-429, Asn-444, Asn-457, Asn-512, and Asn-524 are each glycosylated (N-linked (GlcNAc...) asparagine). Cys-490 and Cys-542 form a disulfide bridge. The helical transmembrane segment at 582–602 (VLITMTVALAYIVLVVGLMLW) threads the bilayer. Topologically, residues 603 to 1033 (CRYRRQARKA…LSKAMQSVEK (431 aa)) are cytoplasmic. Disordered stretches follow at residues 617–679 (LSTK…KKSA) and 718–760 (SPTD…KTSM). The segment covering 655 to 673 (KSSGDAQKSDDTACSQQSR) has biased composition (polar residues). Ser-678 carries the post-translational modification Phosphoserine. A Protein kinase; inactive domain is found at 692 to 1028 (LSELIQIGRG…QLGAALSKAM (337 aa)). Positions 720-731 (TDKDADTEKQHS) are enriched in basic and acidic residues.

The protein belongs to the protein kinase superfamily. Tyr protein kinase family. Insulin receptor subfamily. In terms of assembly, interacts with plexA; component of a receptor complex that mediates the repulsive signaling in response to Semaphorin ligands.

It is found in the cell membrane. Its function is as follows. Acts as a calcium-dependent, homophilic cell adhesion molecule that regulates neural recognition during the development of the nervous system. Component of the repulsive Plexin signaling response to regulate motor axon guidance at the embryonic stage. Also component of a receptor complex that is required in the adult visual system to innervate the lamina layer; specific targeting of R1-R6 axons. The chain is Tyrosine-protein kinase-like otk from Drosophila erecta (Fruit fly).